A 348-amino-acid chain; its full sequence is Dihydroorotase (348 aa).

Zn(2+)-binding residues include His14 and His16. Substrate contacts are provided by residues 16-18 and Asn42; that span reads HLR. Residues Lys100, His137, and His175 each coordinate Zn(2+). Position 100 is an N6-carboxylysine (Lys100). A substrate-binding site is contributed by His137. Leu220 contributes to the substrate binding site. A Zn(2+)-binding site is contributed by Asp248. Asp248 is an active-site residue. 2 residues coordinate substrate: His252 and Ala264.

It belongs to the metallo-dependent hydrolases superfamily. DHOase family. Class II DHOase subfamily. Homodimer. Requires Zn(2+) as cofactor.

It catalyses the reaction (S)-dihydroorotate + H2O = N-carbamoyl-L-aspartate + H(+). The protein operates within pyrimidine metabolism; UMP biosynthesis via de novo pathway; (S)-dihydroorotate from bicarbonate: step 3/3. In terms of biological role, catalyzes the reversible cyclization of carbamoyl aspartate to dihydroorotate. This chain is Dihydroorotase, found in Pseudomonas entomophila (strain L48).